The sequence spans 307 residues: Acetaldehyde dehydrogenase (307 aa).

12 to 15 (SGNI) provides a ligand contact to NAD(+). Residue cysteine 130 is the Acyl-thioester intermediate of the active site. NAD(+)-binding positions include 161 to 169 (SVGPGTRQN) and asparagine 272.

Belongs to the acetaldehyde dehydrogenase family.

It catalyses the reaction acetaldehyde + NAD(+) + CoA = acetyl-CoA + NADH + H(+). The sequence is that of Acetaldehyde dehydrogenase from Shewanella halifaxensis (strain HAW-EB4).